The following is a 413-amino-acid chain: MSFFQSSKWSLIAGGITAPSGFKASGVSAGLKPSKKLDLALLVTSPNAQCSGTFTQSFVRAKCINLCLERLSKTAGKVRAVLVNSGHANACTGNRGIDDSLIATRALAEKLDLLEEEVLICSTGVIGEPIPMQKLLKGLDPLVMNLSKEGGSDAAKAILTTDLIEKEIAIEGYLGDRLIRIGGMAKGSGMIHPNMATMLGFLTCDAGLPKDVWDAMIDRVVDCSFNAISVDGDTSTNDSFLAFAQGDILDSQHFNELEIGLKLVSTYLAQSIVRDGEGANCLFEVKVKGTSKIAHAQIIARQICSSCLVKTAIHGCDPNWGRILSAAGSTGIPFSLDEVSIWIGSFQVMSNGQPVEFNRKLVIRYMKEIIKGNNASDEKLIISLVVGRSEIEAIAWGCDLSSEYIHINADYTT.

6 residues coordinate substrate: Thr-160, Lys-186, Thr-197, Glu-277, Asn-408, and Thr-413. Thr-197 (nucleophile) is an active-site residue.

It belongs to the ArgJ family. As to quaternary structure, heterotetramer of two alpha and two beta chains.

It is found in the cytoplasm. It catalyses the reaction N(2)-acetyl-L-ornithine + L-glutamate = N-acetyl-L-glutamate + L-ornithine. The catalysed reaction is L-glutamate + acetyl-CoA = N-acetyl-L-glutamate + CoA + H(+). Its pathway is amino-acid biosynthesis; L-arginine biosynthesis; L-ornithine and N-acetyl-L-glutamate from L-glutamate and N(2)-acetyl-L-ornithine (cyclic): step 1/1. The protein operates within amino-acid biosynthesis; L-arginine biosynthesis; N(2)-acetyl-L-ornithine from L-glutamate: step 1/4. Its function is as follows. Catalyzes two activities which are involved in the cyclic version of arginine biosynthesis: the synthesis of N-acetylglutamate from glutamate and acetyl-CoA as the acetyl donor, and of ornithine by transacetylation between N(2)-acetylornithine and glutamate. The polypeptide is Arginine biosynthesis bifunctional protein ArgJ (Prochlorococcus marinus (strain SARG / CCMP1375 / SS120)).